Here is a 275-residue protein sequence, read N- to C-terminus: MTLQQQIIKALGAKPQINAEEEIRRSVDFLKSYLQTYPFIKSLVLGISGGQDSTLAGKLCQMAINELRQETGNESLQFIAVRLPYGVQADEQDCQDAIAFIQPDRVLTVNIKGAVLASEQALREACIELSDFVRGNEKARERMKAQYSIAGMTSGVVVGTDHAAEAITGFFTKYGDGGTDINPLYRLNKRQGKQLLAALGCPEHLYKKAPTADLEDDRPSLPDEVALGVTYDNIDDYLEGKNVPQQVARTIENWYLKTEHKRRPPITVFDDFWKK.

46-53 (GISGGQDS) serves as a coordination point for ATP. Position 52 (Asp52) interacts with Mg(2+). Arg140 contacts deamido-NAD(+). Thr160 provides a ligand contact to ATP. Position 165 (Glu165) interacts with Mg(2+). Positions 173 and 180 each coordinate deamido-NAD(+). Residues Lys189 and Thr211 each coordinate ATP. Residue 260-261 (HK) participates in deamido-NAD(+) binding.

Belongs to the NAD synthetase family. In terms of assembly, homodimer.

It catalyses the reaction deamido-NAD(+) + NH4(+) + ATP = AMP + diphosphate + NAD(+) + H(+). The protein operates within cofactor biosynthesis; NAD(+) biosynthesis; NAD(+) from deamido-NAD(+) (ammonia route): step 1/1. Functionally, catalyzes the ATP-dependent amidation of deamido-NAD to form NAD. Uses ammonia as a nitrogen source. This chain is NH(3)-dependent NAD(+) synthetase, found in Escherichia coli O157:H7.